The following is a 274-amino-acid chain: MAFLCSSLPSSSSIAIFGDPNTDGSSRSYLSIPSLKLRFRPVAASSHICAPAIDKSTFVISESVSEDELWAAACLRVRTFNELNPSAYNIQDHRRYLAEREFEALKERTSGKREGFTRVACINATLPLSQLSSSFEDLCSACKFSDGIEDRVVVGSLDLNQCRWLPDEIAGTKPEGIGVDFARAYLSNVCVAKELHRNGVGYKLIDKSKRVAGEWGITDMYVHVTVDNEAAKSLYMKSGFEQETAEPAWQARYLNRPQRLLLWLALPTSPIMSM.

The N-terminal 65 residues, methionine 1–serine 65, are a transit peptide targeting the chloroplast. The region spanning leucine 75–proline 267 is the N-acetyltransferase domain. Residues valine 189–valine 191, arginine 197–tyrosine 202, asparagine 228–alanine 230, and tyrosine 235 each bind acetyl-CoA. Residue tyrosine 235 is the Proton donor of the active site.

It belongs to the acetyltransferase family. GNAT subfamily. In terms of assembly, oligomer. In terms of processing, autoacetylated. As to expression, expressed in green tissues.

The protein localises to the plastid. Its subcellular location is the chloroplast. It carries out the reaction an N-terminal L-alpha-aminoacyl-[protein] + acetyl-CoA = N-terminal N(alpha)-acetyl-L-alpha-aminoacyl-[protein] + CoA + H(+). It catalyses the reaction L-lysyl-[protein] + acetyl-CoA = N(6)-acetyl-L-lysyl-[protein] + CoA + H(+). The catalysed reaction is N-terminal L-alanyl-[protein] + acetyl-CoA = N-terminal N(alpha)-acetyl-L-alanyl-[protein] + CoA + H(+). The enzyme catalyses N-terminal L-seryl-[protein] + acetyl-CoA = N-terminal N(alpha)-acetyl-L-seryl-[protein] + CoA + H(+). It carries out the reaction N-terminal L-threonyl-[protein] + acetyl-CoA = N-terminal N(alpha)-acetyl-L-threonyl-[protein] + CoA + H(+). It catalyses the reaction N-terminal L-methionyl-[protein] + acetyl-CoA = N-terminal N(alpha)-acetyl-L-methionyl-[protein] + CoA + H(+). The catalysed reaction is N-terminal L-prolyl-[protein] + acetyl-CoA = N-terminal N(alpha)-acetyl-L-prolyl-[protein] + CoA + H(+). The enzyme catalyses N-terminal L-valyl-[protein] + acetyl-CoA = N-terminal N(alpha)-acetyl-L-valyl-[protein] + CoA + H(+). Its function is as follows. Protein acetyltransferase with dual specificity triggering both N-alpha-acetylation (NTA), with a large spectrum of modified N-termini, including methionine, alanine, serine, threonine and to a lower extent valine and proline as substrates, and epsilon-lysine acetylation (KA). This Arabidopsis thaliana (Mouse-ear cress) protein is GCN5-related N-acetyltransferase 7, chloroplastic.